The sequence spans 303 residues: ATP synthase gamma chain (303 aa).

Belongs to the ATPase gamma chain family. F-type ATPases have 2 components, CF(1) - the catalytic core - and CF(0) - the membrane proton channel. CF(1) has five subunits: alpha(3), beta(3), gamma(1), delta(1), epsilon(1). CF(0) has three main subunits: a, b and c.

It localises to the cell membrane. Functionally, produces ATP from ADP in the presence of a proton gradient across the membrane. The gamma chain is believed to be important in regulating ATPase activity and the flow of protons through the CF(0) complex. This is ATP synthase gamma chain from Nocardioides sp. (strain ATCC BAA-499 / JS614).